Here is a 603-residue protein sequence, read N- to C-terminus: UvrABC system protein C (603 aa).

The GIY-YIG domain occupies 15-92 (DQPGCYLMKD…IKKHDPRFNI (78 aa)). Residues 197–232 (KTVKNDLMKKMQEAAENMEFEKAGEFRDQINAIETT) enclose the UVR domain.

It belongs to the UvrC family. As to quaternary structure, interacts with UvrB in an incision complex.

The protein localises to the cytoplasm. In terms of biological role, the UvrABC repair system catalyzes the recognition and processing of DNA lesions. UvrC both incises the 5' and 3' sides of the lesion. The N-terminal half is responsible for the 3' incision and the C-terminal half is responsible for the 5' incision. This chain is UvrABC system protein C, found in Listeria monocytogenes serotype 4b (strain CLIP80459).